The primary structure comprises 315 residues: Homoserine kinase (315 aa).

91-101 (PIGSGLGSSAS) contributes to the ATP binding site.

It belongs to the GHMP kinase family. Homoserine kinase subfamily.

It localises to the cytoplasm. It carries out the reaction L-homoserine + ATP = O-phospho-L-homoserine + ADP + H(+). It participates in amino-acid biosynthesis; L-threonine biosynthesis; L-threonine from L-aspartate: step 4/5. In terms of biological role, catalyzes the ATP-dependent phosphorylation of L-homoserine to L-homoserine phosphate. This Buchnera aphidicola subsp. Cinara cedri (strain Cc) protein is Homoserine kinase.